Reading from the N-terminus, the 257-residue chain is Diphthine synthase (257 aa).

S-adenosyl-L-methionine contacts are provided by residues leucine 9, aspartate 86, valine 89, 114 to 115 (SI), leucine 166, alanine 207, and histidine 232.

Belongs to the diphthine synthase family. Homodimer.

The enzyme catalyses 2-[(3S)-amino-3-carboxypropyl]-L-histidyl-[translation elongation factor 2] + 3 S-adenosyl-L-methionine = diphthine-[translation elongation factor 2] + 3 S-adenosyl-L-homocysteine + 3 H(+). The protein operates within protein modification; peptidyl-diphthamide biosynthesis. S-adenosyl-L-methionine-dependent methyltransferase that catalyzes the trimethylation of the amino group of the modified target histidine residue in translation elongation factor 2 (EF-2), to form an intermediate called diphthine. The three successive methylation reactions represent the second step of diphthamide biosynthesis. The protein is Diphthine synthase of Methanocella arvoryzae (strain DSM 22066 / NBRC 105507 / MRE50).